A 296-amino-acid polypeptide reads, in one-letter code: Transmembrane protein 156 (296 aa).

The Cytoplasmic segment spans residues 1-4 (MTKT). A helical transmembrane segment spans residues 5 to 25 (ALLKLFVAIVITFILILPEYF). The Extracellular portion of the chain corresponds to 26–211 (KTPKERTLEL…EMDIKNITCS (186 aa)). Residues Asn45 and Asn156 are each glycosylated (N-linked (GlcNAc...) asparagine). Residues 212–232 (MKITWYILVLLVFIFLIILTI) form a helical membrane-spanning segment. At 233–296 (RKILEGQRRV…QEVLPPIPEL (64 aa)) the chain is on the cytoplasmic side.

Its subcellular location is the membrane. This chain is Transmembrane protein 156 (TMEM156), found in Homo sapiens (Human).